The primary structure comprises 276 residues: S-adenosylmethionine decarboxylase proenzyme (276 aa).

The active-site Schiff-base intermediate with substrate; via pyruvic acid is Ser-126. Ser-126 is subject to Pyruvic acid (Ser); by autocatalysis. His-131 serves as the catalytic Proton acceptor; for processing activity. Cys-154 acts as the Proton donor; for catalytic activity in catalysis.

It belongs to the prokaryotic AdoMetDC family. Type 2 subfamily. Heterooctamer of four alpha and four beta chains arranged as a tetramer of alpha/beta heterodimers. Pyruvate serves as cofactor. Is synthesized initially as an inactive proenzyme. Formation of the active enzyme involves a self-maturation process in which the active site pyruvoyl group is generated from an internal serine residue via an autocatalytic post-translational modification. Two non-identical subunits are generated from the proenzyme in this reaction, and the pyruvate is formed at the N-terminus of the alpha chain, which is derived from the carboxyl end of the proenzyme. The post-translation cleavage follows an unusual pathway, termed non-hydrolytic serinolysis, in which the side chain hydroxyl group of the serine supplies its oxygen atom to form the C-terminus of the beta chain, while the remainder of the serine residue undergoes an oxidative deamination to produce ammonia and the pyruvoyl group blocking the N-terminus of the alpha chain.

The enzyme catalyses S-adenosyl-L-methionine + H(+) = S-adenosyl 3-(methylsulfanyl)propylamine + CO2. It participates in amine and polyamine biosynthesis; S-adenosylmethioninamine biosynthesis; S-adenosylmethioninamine from S-adenosyl-L-methionine: step 1/1. Catalyzes the decarboxylation of S-adenosylmethionine to S-adenosylmethioninamine (dcAdoMet), the propylamine donor required for the synthesis of the polyamines spermine and spermidine from the diamine putrescine. In Alcanivorax borkumensis (strain ATCC 700651 / DSM 11573 / NCIMB 13689 / SK2), this protein is S-adenosylmethionine decarboxylase proenzyme.